Reading from the N-terminus, the 758-residue chain is Glucocorticoid receptor (758 aa).

2 disordered regions span residues 1–61 and 349–382; these read MDPG…SANG and GMSS…PSGP. Residues 1–386 form a modulating region; sequence MDPGGLKHSK…AKPSGPTHKI (386 aa). A compositionally biased stretch (low complexity) spans 26–42; it reads GSFSGDTGGSKSTTSTS. NR C4-type zinc fingers lie at residues 387–407 and 432–456; these read CLVC…CGSC and CAGR…FRKC. A DNA-binding region (nuclear receptor) is located at residues 387 to 461; the sequence is CLVCSDEASG…RFRKCLQAGM (75 aa). The tract at residues 462-498 is hinge; the sequence is NLEARKNKKLIRLKGQQTTMEPNPPPPDERACALIPK. Residues 499–733 enclose the NR LBD domain; sequence SMPQLVPTML…FPEMLAEIIS (235 aa).

It belongs to the nuclear hormone receptor family. NR3 subfamily. Heteromultimeric cytoplasmic complex with HSP90AA1, HSPA1A/HSPA1B, and FKBP5 or another immunophilin such as PPID, STIP1, or the immunophilin homolog PPP5C. Upon ligand binding FKBP5 dissociates from the complex and FKBP4 takes its place, thereby linking the complex to dynein and mediating transport to the nucleus, where the complex dissociates. Directly interacts with UNC45A. Binds to DNA as a homodimer, and as heterodimer with NR3C2 or the retinoid X receptor. Binds STAT5A and STAT5B homodimers and heterodimers. Interacts with NRIP1, POU2F1, POU2F2 and TRIM28. Interacts with several coactivator complexes, including the SMARCA4 complex, CREBBP/EP300, TADA2L (Ada complex) and p160 coactivators such as NCOA2 and NCOA6. Interaction with BAG1 inhibits transactivation. Interacts with HEXIM1, PELP1 and TGFB1I1. Interacts with NCOA1, NCOA3, SMARCA4, SMARCC1, SMARCD1, and SMARCE1. In terms of processing, phosphorylated in the absence of hormone; becomes hyperphosphorylated in the presence of glucocorticoids. May be dephosphorylated by PPP5C, attenuates NR3C1 action. In terms of tissue distribution, isoform 1 is expressed in all tissues tested including liver, gills, intestine, skeletal muscle, kidney, heart, spleen, stomach, brain, pituitary, ovary, testis, skin and bladder. Isoform 2 is found only in testis.

The protein localises to the cytoplasm. Its subcellular location is the nucleus. The protein resides in the mitochondrion. It is found in the cytoskeleton. It localises to the spindle. The protein localises to the microtubule organizing center. Its subcellular location is the centrosome. Receptor for glucocorticoids (GC). Has a dual mode of action: as a transcription factor that binds to glucocorticoid response elements (GRE), both for nuclear and mitochondrial DNA, and as a modulator of other transcription factors. Affects inflammatory responses, cellular proliferation and differentiation in target tissues. Involved in chromatin remodeling. Plays a role in rapid mRNA degradation by binding to the 5' UTR of target mRNAs and interacting with PNRC2 in a ligand-dependent manner which recruits the RNA helicase UPF1 and the mRNA-decapping enzyme DCP1A, leading to RNA decay. Could act as a coactivator for STAT5-dependent transcription upon growth hormone (GH) stimulation and could reveal an essential role of hepatic GR in the control of body growth. Mediates glucocorticoid-induced apoptosis. Promotes accurate chromosome segregation during mitosis. May act as a tumor suppressor. May play a negative role in adipogenesis through the regulation of lipolytic and antilipogenic gene expression. This Oncorhynchus mykiss (Rainbow trout) protein is Glucocorticoid receptor (nr3c1).